The primary structure comprises 377 residues: Protein MULTIPOLAR SPINDLE 1 (377 aa).

Positions 117-124 (LRRRFLRL) match the Nuclear localization signal motif.

Expressed in roots, stems, leaves, inflorescences and seedlings. Strongly expressed in meiocytes.

It is found in the nucleus. It localises to the cytoplasm. The protein localises to the cytoskeleton. Its subcellular location is the spindle. Functionally, involved in meiotic spindle organization in meiocytes thus regulating chromosome segregation. Required for formation of meiotic DNA double-strand breaks (DSBs) during early recombination processes. The protein is Protein MULTIPOLAR SPINDLE 1 of Arabidopsis thaliana (Mouse-ear cress).